A 2541-amino-acid polypeptide reads, in one-letter code: Talin-1 (2541 aa).

The 318-residue stretch at 86-403 (RPLKIRMLDG…GYIDIILKKK (318 aa)) folds into the FERM domain. An interaction with LAYN region spans residues 280–435 (FMAHKNCGNM…PKKSTVLQQQ (156 aa)). Residues 482–655 (RGHMPPLTSA…QTSGELLQQI (174 aa)) are helical bundle R1. The helical bundle R2 stretch occupies residues 656-786 (GESDTDPRFQ…ALNDLLQHIK (131 aa)). The tract at residues 787-911 (QHATGGQPIG…NAAAQNAIKK (125 aa)) is helical bundle R3. A helical bundle R4 region spans residues 913–1043 (LVHKLEHAAK…RTAAQKAQEA (131 aa)). The segment at 1045–1205 (GPLEIDSALG…NRCVNCLPGQ (161 aa)) is helical bundle R5. The helical bundle R6 stretch occupies residues 1206–1356 (RDVDAAIRMV…QLITMCTQQA (151 aa)). The segment at 1357–1452 (PGQKECDNAL…AYLVGVSDPN (96 aa)) is helical bundle R7A. The tract at residues 1358 to 1658 (GQKECDNALR…NMRDKAPGQR (301 aa)) is interaction with VCL and F-actin. Residues 1460 to 1579 (LVDPTQFARA…NLTAFASNPE (120 aa)) form a helical bundle R8 region. A glycan (O-linked (GlcNAc) threonine) is linked at T1486. The segment at 1580–1652 (FATVPAQISP…IKKLITNMRD (73 aa)) is helical bundle R7B. The segment at 1654–1821 (APGQRECDEA…TLNEAASAAG (168 aa)) is helical bundle R9. The tract at residues 1822 to 1972 (VVGGMVDSIT…VLAALQAGNR (151 aa)) is helical bundle R10. T1889 carries O-linked (GlcNAc) threonine glycosylation. Positions 1973–2139 (GTQACITAAS…TVKAVEDEAT (167 aa)) are helical bundle R11. Residues 2140–2293 (KGTRALEATI…QAAEAMKGTE (154 aa)) are helical bundle R12. Positions 2292 to 2531 (TEWVDPEDPT…MIRQQQYKFL (240 aa)) constitute an I/LWEQ domain. The segment at 2299 to 2481 (DPTVIAENEL…AAQKAAAFQD (183 aa)) is helical bundle R13.

As to quaternary structure, interacts with PIP5K1C and NRAP. Binds with high affinity to vinculin VCL and with low affinity to integrins. Interacts with APBB1IP; this inhibits VCL binding. Interacts with F-actin. Interacts with LAYN. Interacts with THSD1. Phosphorylated.

The protein localises to the cell projection. Its subcellular location is the ruffle membrane. It is found in the cytoplasm. The protein resides in the cytoskeleton. It localises to the cell surface. The protein localises to the cell junction. Its subcellular location is the focal adhesion. Functionally, high molecular weight cytoskeletal protein concentrated at regions of cell-substratum contact and, in lymphocytes, at cell-cell contacts. Involved in connections of major cytoskeletal structures to the plasma membrane. This chain is Talin-1 (TLN1), found in Gallus gallus (Chicken).